We begin with the raw amino-acid sequence, 343 residues long: Tribbles homolog 2 (343 aa).

The tract at residues 25–50 is disordered; it reads EELSSIRSAEPSQSFSPNLGSPSPPE. A compositionally biased stretch (polar residues) spans 29–45; that stretch reads SIRSAEPSQSFSPNLGS. The Protein kinase domain occupies 61 to 308; it reads IGKYLLLEPL…SQEILDHPWF (248 aa).

Belongs to the protein kinase superfamily. CAMK Ser/Thr protein kinase family. Tribbles subfamily. In terms of tissue distribution, highly expressed in the thyroid, also present in ovary and cerebrum.

It localises to the cytoplasm. The protein localises to the cytoskeleton. In terms of biological role, interacts with MAPK kinases and regulates activation of MAP kinases. Does not display kinase activity. The polypeptide is Tribbles homolog 2 (Canis lupus familiaris (Dog)).